Reading from the N-terminus, the 662-residue chain is Bifunctional polymyxin resistance protein ArnA (662 aa).

Positions 1-307 (MTSKAVVFAY…ELGLVEGARL (307 aa)) are formyltransferase ArnAFT. The active-site Proton donor; for formyltransferase activity is His-106. (6R)-10-formyltetrahydrofolate-binding positions include Arg-116 and 138 to 142 (IERAD). Residues 316-662 (RRTRVLILGV…EALREREAQA (347 aa)) are dehydrogenase ArnADH. NAD(+) contacts are provided by residues Asp-349 and 370 to 371 (DI). Residues Ala-395, Tyr-400, and 434–435 (TS) contribute to the UDP-alpha-D-glucuronate site. The Proton acceptor; for decarboxylase activity role is filled by Glu-436. UDP-alpha-D-glucuronate-binding positions include Arg-462, Asn-493, 527 to 536 (RLVDGGAQKR), and Tyr-614. Catalysis depends on Arg-620, which acts as the Proton donor; for decarboxylase activity.

This sequence in the N-terminal section; belongs to the Fmt family. UDP-L-Ara4N formyltransferase subfamily. It in the C-terminal section; belongs to the NAD(P)-dependent epimerase/dehydratase family. UDP-glucuronic acid decarboxylase subfamily. Homohexamer, formed by a dimer of trimers.

The enzyme catalyses UDP-alpha-D-glucuronate + NAD(+) = UDP-beta-L-threo-pentopyranos-4-ulose + CO2 + NADH. It carries out the reaction UDP-4-amino-4-deoxy-beta-L-arabinose + (6R)-10-formyltetrahydrofolate = UDP-4-deoxy-4-formamido-beta-L-arabinose + (6S)-5,6,7,8-tetrahydrofolate + H(+). It functions in the pathway nucleotide-sugar biosynthesis; UDP-4-deoxy-4-formamido-beta-L-arabinose biosynthesis; UDP-4-deoxy-4-formamido-beta-L-arabinose from UDP-alpha-D-glucuronate: step 1/3. The protein operates within nucleotide-sugar biosynthesis; UDP-4-deoxy-4-formamido-beta-L-arabinose biosynthesis; UDP-4-deoxy-4-formamido-beta-L-arabinose from UDP-alpha-D-glucuronate: step 3/3. Its pathway is bacterial outer membrane biogenesis; lipopolysaccharide biosynthesis. Its function is as follows. Bifunctional enzyme that catalyzes the oxidative decarboxylation of UDP-glucuronic acid (UDP-GlcUA) to UDP-4-keto-arabinose (UDP-Ara4O) and the addition of a formyl group to UDP-4-amino-4-deoxy-L-arabinose (UDP-L-Ara4N) to form UDP-L-4-formamido-arabinose (UDP-L-Ara4FN). The modified arabinose is attached to lipid A and is required for resistance to polymyxin and cationic antimicrobial peptides. This Pseudomonas aeruginosa (strain UCBPP-PA14) protein is Bifunctional polymyxin resistance protein ArnA.